Reading from the N-terminus, the 290-residue chain is Polyamine aminopropyltransferase (290 aa).

Positions 5–238 (QLWYEKLHSS…GIMTFAWASE (234 aa)) constitute a PABS domain. Gln33 contributes to the S-methyl-5'-thioadenosine binding site. 2 residues coordinate spermidine: His64 and Asp88. S-methyl-5'-thioadenosine-binding positions include Glu108 and 140 to 141 (DG). The active-site Proton acceptor is Asp158. 158 to 161 (DSTD) lines the spermidine pocket. Residue Pro165 coordinates S-methyl-5'-thioadenosine.

It belongs to the spermidine/spermine synthase family. In terms of assembly, homodimer or homotetramer.

Its subcellular location is the cytoplasm. It carries out the reaction S-adenosyl 3-(methylsulfanyl)propylamine + putrescine = S-methyl-5'-thioadenosine + spermidine + H(+). The protein operates within amine and polyamine biosynthesis; spermidine biosynthesis; spermidine from putrescine: step 1/1. Functionally, catalyzes the irreversible transfer of a propylamine group from the amino donor S-adenosylmethioninamine (decarboxy-AdoMet) to putrescine (1,4-diaminobutane) to yield spermidine. The polypeptide is Polyamine aminopropyltransferase (Hamiltonella defensa subsp. Acyrthosiphon pisum (strain 5AT)).